The following is a 236-amino-acid chain: Ubiquinone biosynthesis O-methyltransferase (236 aa).

S-adenosyl-L-methionine contacts are provided by Arg-39, Gly-59, Asp-80, and Met-124.

Belongs to the methyltransferase superfamily. UbiG/COQ3 family.

It carries out the reaction a 3-demethylubiquinol + S-adenosyl-L-methionine = a ubiquinol + S-adenosyl-L-homocysteine + H(+). It catalyses the reaction a 3-(all-trans-polyprenyl)benzene-1,2-diol + S-adenosyl-L-methionine = a 2-methoxy-6-(all-trans-polyprenyl)phenol + S-adenosyl-L-homocysteine + H(+). Its pathway is cofactor biosynthesis; ubiquinone biosynthesis. O-methyltransferase that catalyzes the 2 O-methylation steps in the ubiquinone biosynthetic pathway. This Shewanella halifaxensis (strain HAW-EB4) protein is Ubiquinone biosynthesis O-methyltransferase.